A 505-amino-acid polypeptide reads, in one-letter code: RNA-binding region-containing protein 3 (505 aa).

In terms of domain architecture, RRM 1 spans 15 to 90; sequence KTLIIRHLPR…RTLVVEFAKD (76 aa). 4 disordered regions span residues 96 to 123, 193 to 236, 354 to 374, and 486 to 505; these read ILKD…QPSV, PPMF…EEER, AQVP…SEFI, and ARSA…GRKH. Over residues 193–214 the composition is skewed to pro residues; it reads PPMFEMPSGPLPPPFPPENPPL. Composition is skewed to acidic residues over residues 221–235 and 361–370; these read GSEE…DEEE and EEQEEDEDIP. Residues 405–488 form the RRM 2 domain; that stretch reads CRLYVKNVAK…KPLVVQFARS (84 aa). A compositionally biased stretch (basic and acidic residues) spans 491–505; it reads PKQESADPKKGGRKH.

Component of the U11/U12 snRNPs that are part of the U12-type spliceosome.

It is found in the nucleus. Its function is as follows. Participates in pre-mRNA U12-dependent splicing, performed by the minor spliceosome which removes U12-type introns. U12-type introns comprise less than 1% of all non-coding sequences. The chain is RNA-binding region-containing protein 3 from Danio rerio (Zebrafish).